The chain runs to 469 residues: Protein POLLENLESS 3-LIKE 1 (469 aa).

The disordered stretch occupies residues 1–20 (MRRRESRGAKGGGFLTPPPS). TPR repeat units follow at residues 88–121 (DSAL…CPFE), 124–157 (DSID…LEQD), and 184–217 (ARIL…EPDN). Residues 139-191 (RITEVAELLEHKLRTLEQDKHYGGRIKIAKRSHEEQNNKTIEQEKARILGNLA) adopt a coiled-coil conformation. Residues 314–338 (NIHKTNSHASSESVEQNSPGLTTQP) show a composition bias toward polar residues. The tract at residues 314-339 (NIHKTNSHASSESVEQNSPGLTTQPR) is disordered.

It belongs to the MS5 protein family. As to expression, expressed in floral and vegetative organs. Also barely detectable in leaves and stems.

It localises to the nucleus. Probably involved in the regulation of cell division. The chain is Protein POLLENLESS 3-LIKE 1 from Arabidopsis thaliana (Mouse-ear cress).